The chain runs to 600 residues: tRNA(Ile)-lysidine synthase, chloroplastic (600 aa).

Position 35-40 (35-40 (SGGQDS)) interacts with ATP.

The protein belongs to the tRNA(Ile)-lysidine synthase family.

The protein localises to the plastid. Its subcellular location is the chloroplast. It catalyses the reaction cytidine(34) in tRNA(Ile2) + L-lysine + ATP = lysidine(34) in tRNA(Ile2) + AMP + diphosphate + H(+). Functionally, ligates lysine onto the cytidine present at position 34 of the AUA codon-specific tRNA(Ile) that contains the anticodon CAU, in an ATP-dependent manner. Cytidine is converted to lysidine, thus changing the amino acid specificity of the tRNA from methionine to isoleucine. This chain is tRNA(Ile)-lysidine synthase, chloroplastic, found in Tupiella akineta (Green alga).